The sequence spans 432 residues: uncharacterized protein (432 aa).

Positions A223–R432 constitute a Cytochrome c domain. The heme c site is built by C236, C239, and H240.

This is an uncharacterized protein from Sinorhizobium fredii (strain NBRC 101917 / NGR234).